Consider the following 1296-residue polypeptide: Histone-lysine N-methyltransferase EHMT1 (1296 aa).

2 disordered regions span residues 1–111 (MAAA…NHVT) and 170–200 (PQTP…TDVR). Ala2 carries the N-acetylalanine modification. The segment covering 14–31 (QETKQDCCMKTELLREDT) has biased composition (basic and acidic residues). Lys23 is covalently cross-linked (Glycyl lysine isopeptide (Lys-Gly) (interchain with G-Cter in SUMO1); alternate). A Glycyl lysine isopeptide (Lys-Gly) (interchain with G-Cter in SUMO2); alternate cross-link involves residue Lys23. A compositionally biased stretch (polar residues) spans 77 to 89 (NTRASPQEGTNRV). Basic and acidic residues predominate over residues 97 to 106 (VSERDTEVGK). Residues Lys191, Lys229, Lys232, Lys315, and Lys325 each participate in a glycyl lysine isopeptide (Lys-Gly) (interchain with G-Cter in SUMO2) cross-link. Residues 341–470 (SLEMDSEDED…SSPGSMEQAA (130 aa)) are disordered. Residues 342-360 (LEMDSEDEDSDELEDDEDH) are compositionally biased toward acidic residues. The span at 371-391 (EDSRTSKESMSETDRAAKMDG) shows a compositional bias: basic and acidic residues. Positions 392–414 (DSEEEQESPDTGEDEDGGDESDL) are enriched in acidic residues. Lys430 participates in a covalent cross-link: Glycyl lysine isopeptide (Lys-Gly) (interchain with G-Cter in SUMO2). A Phosphoserine modification is found at Ser433. Positions 438–450 (PARKRRRRSRKKP) are enriched in basic residues. Ser481 carries the post-translational modification Phosphoserine. Glycyl lysine isopeptide (Lys-Gly) (interchain with G-Cter in SUMO2) cross-links involve residues Lys559, Lys644, Lys659, and Lys729. Residues 653–714 (LAPGQEKSLA…PTSGLSQGPG (62 aa)) are disordered. ANK repeat units follow at residues 735–764 (FHPK…DPNF), 770–799 (SKRS…NIDT), 803–832 (DQRT…QVDP), 836–866 (EGST…DVNC), 870–899 (GGWT…DINI), 903–932 (EENI…DLHA), 936–965 (HGDS…DVTL), and 969–1002 (EGET…DKPV). The segment at 903–905 (EEN) is histone H3K9me binding. Position 1046 is a phosphoserine (Ser1046). In terms of domain architecture, Pre-SET spans 1058 to 1121 (QYCVCVDDCS…NCRNRVVQNG (64 aa)). Positions 1060, 1062, 1066, 1071, 1073, 1103, 1107, 1109, and 1113 each coordinate Zn(2+). Positions 1124-1241 (ARLQLYRTQD…AGEQLGFDYG (118 aa)) constitute an SET domain. Residues 1134-1136 (MGW), Tyr1171, and 1198-1199 (NH) each bind S-adenosyl-L-methionine. Residues 1160 to 1179 (DSEADVREEDSYLFDLDNKD) are interaction with histone H3. Cys1201 serves as a coordination point for Zn(2+). The interaction with histone H3 stretch occupies residues 1240 to 1243 (YGER). Cys1254 serves as a coordination point for Zn(2+). Residue Arg1255 coordinates S-adenosyl-L-methionine. Positions 1256 and 1261 each coordinate Zn(2+). A disordered region spans residues 1271-1296 (RQASAAQEPQENGLPDTSSAAAADPL).

Belongs to the class V-like SAM-binding methyltransferase superfamily. Interacts with WIZ. Part of the E2F6.com-1 complex in G0 phase composed of E2F6, MGA, MAX, TFDP1, CBX3, BAT8, EHMT1, RING1, RNF2, MBLR, L3MBTL2 and YAF2. Interacts with MPHOSPH8. Interacts with CDYL. Interacts with REST only in the presence of CDYL. Part of a complex containing at least CDYL, REST, WIZ, SETB1, EHMT1 and EHMT2. Heterodimer; heterodimerizes with EHMT2. Interacts (via ANK repeats) with RELA (when monomethylated at 'Lys-310'). Interacts with Baz2b. As to expression, ubiquitous.

Its subcellular location is the nucleus. The protein resides in the chromosome. It catalyses the reaction N(6)-methyl-L-lysyl(9)-[histone H3] + S-adenosyl-L-methionine = N(6),N(6)-dimethyl-L-lysyl(9)-[histone H3] + S-adenosyl-L-homocysteine + H(+). The enzyme catalyses L-lysyl(9)-[histone H3] + S-adenosyl-L-methionine = N(6)-methyl-L-lysyl(9)-[histone H3] + S-adenosyl-L-homocysteine + H(+). Its activity is regulated as follows. Methyltransferase activity is inhibited by BIX-01294. Efficiently inhibited by compound E72, a BIX-01294 derivative in which the diazepane ring and the benzyl are replaced with a 3-dimethylaminopropyl and a 5-aminopentyl group at sites B and C, respectively. Functionally, histone methyltransferase that specifically mono- and dimethylates 'Lys-9' of histone H3 (H3K9me1 and H3K9me2, respectively) in euchromatin. H3K9me represents a specific tag for epigenetic transcriptional repression by recruiting HP1 proteins to methylated histones. Also weakly methylates 'Lys-27' of histone H3 (H3K27me). Also required for DNA methylation, the histone methyltransferase activity is not required for DNA methylation, suggesting that these 2 activities function independently. Probably targeted to histone H3 by different DNA-binding proteins like E2F6, MGA, MAX and/or DP1. During G0 phase, it probably contributes to silencing of MYC- and E2F-responsive genes, suggesting a role in G0/G1 transition in cell cycle. In addition to the histone methyltransferase activity, also methylates non-histone proteins: mediates dimethylation of 'Lys-373' of p53/TP53. Represses the expression of mitochondrial function-related genes, perhaps by occupying their promoter regions, working in concert with probable chromatin reader Baz2b. In Mus musculus (Mouse), this protein is Histone-lysine N-methyltransferase EHMT1 (Ehmt1).